Consider the following 48-residue polypeptide: Fimbrial assembly protein, serogroup F1 (48 aa).

The chain is Fimbrial assembly protein, serogroup F1 (fimB) from Dichelobacter nodosus (Bacteroides nodosus).